We begin with the raw amino-acid sequence, 653 residues long: Epithelial sodium channel subunit gamma (653 aa).

At 1 to 54 the chain is on the cytoplasmic side; that stretch reads MGHGRRISESIKKQLPVTGPEAPTVKNLMDWYLNNTNTHGCRRIAVSRGYLRRW. A helical membrane pass occupies residues 55-75; sequence IWICFTVSSVGMIFWQWTLLL. The Extracellular portion of the chain corresponds to 76 to 546; it reads MSYYTVSVSV…GGQLGLWMSC (471 aa). 8 disulfides stabilise this stretch: Cys-100-Cys-290, Cys-214-Cys-221, Cys-267-Cys-274, Cys-379-Cys-464, Cys-401-Cys-460, Cys-405-Cys-456, Cys-414-Cys-441, and Cys-416-Cys-430. The helical transmembrane segment at 547–567 threads the bilayer; the sequence is SIVCFLEMWEVFLVDILTIIA. Over 568 to 653 the chain is Cytoplasmic; it reads RYWLHRGRQW…DEQVSDTEVN (86 aa). The disordered stretch occupies residues 582–608; sequence KERQMQQPSPPDHDTGHHNPVCIDDED.

It belongs to the amiloride-sensitive sodium channel (TC 1.A.6) family. SCNN1G subfamily. As to quaternary structure, component of the heterotrimeric epithelial sodium channel (ENaC) composed of an alpha/SCNN1A, a beta/SCNN1B and a gamma/SCNN1G subunit. As to expression, strongly expressed in gill, liver, kidney and rectum and more weakly in heart, muscle and intestine.

The protein resides in the apical cell membrane. The catalysed reaction is Na(+)(in) = Na(+)(out). Originally identified and characterized by its inhibition by the diuretic drug amiloride. In terms of biological role, this is one of the three pore-forming subunits of the heterotrimeric epithelial sodium channel (ENaC), a critical regulator of sodium balance and fluid homeostasis. ENaC operates in epithelial tissues, where it mediates the electrodiffusion of sodium ions from extracellular fluid through the apical membrane of cells, with water following osmotically. This is Epithelial sodium channel subunit gamma from Neoceratodus forsteri (Australian lungfish).